We begin with the raw amino-acid sequence, 105 residues long: Large ribosomal subunit protein uL23 (105 aa).

Belongs to the universal ribosomal protein uL23 family. Part of the 50S ribosomal subunit. Contacts protein L29, and trigger factor when it is bound to the ribosome.

Functionally, one of the early assembly proteins it binds 23S rRNA. One of the proteins that surrounds the polypeptide exit tunnel on the outside of the ribosome. Forms the main docking site for trigger factor binding to the ribosome. This chain is Large ribosomal subunit protein uL23, found in Chloroherpeton thalassium (strain ATCC 35110 / GB-78).